The chain runs to 510 residues: NAD(P)H-quinone oxidoreductase subunit 2 A, chloroplastic (510 aa).

12 helical membrane-spanning segments follow: residues 24-44, 59-79, 99-119, 124-144, 149-169, 183-203, 229-249, 295-315, 323-343, 354-374, 395-415, and 418-438; these read LLLF…GLIL, WFYF…LFRW, IFQF…VEYI, MAIT…MFLC, LITI…LSGY, YLLM…WLYG, ISLA…PAPF, WHLL…LLAI, MLAY…IVGD, YMLF…LFGL, ALSL…AGFF, and LYLF…IGLL.

Belongs to the complex I subunit 2 family. As to quaternary structure, NDH is composed of at least 16 different subunits, 5 of which are encoded in the nucleus.

Its subcellular location is the plastid. The protein resides in the chloroplast thylakoid membrane. The enzyme catalyses a plastoquinone + NADH + (n+1) H(+)(in) = a plastoquinol + NAD(+) + n H(+)(out). The catalysed reaction is a plastoquinone + NADPH + (n+1) H(+)(in) = a plastoquinol + NADP(+) + n H(+)(out). In terms of biological role, NDH shuttles electrons from NAD(P)H:plastoquinone, via FMN and iron-sulfur (Fe-S) centers, to quinones in the photosynthetic chain and possibly in a chloroplast respiratory chain. The immediate electron acceptor for the enzyme in this species is believed to be plastoquinone. Couples the redox reaction to proton translocation, and thus conserves the redox energy in a proton gradient. The protein is NAD(P)H-quinone oxidoreductase subunit 2 A, chloroplastic of Triticum aestivum (Wheat).